Consider the following 420-residue polypeptide: UDP-N-acetyl-D-mannosamine dehydrogenase (420 aa).

The NAD(+) site is built by Tyr13, Ile14, Asp33, Thr85, and Thr126. Arg160, Val161, Lys212, Asn216, Arg219, His250, Arg252, and Gly263 together coordinate UDP-N-acetyl-alpha-D-mannosaminouronate. The active-site Proton donor/acceptor is the Lys212. Cys266 (nucleophile) is an active-site residue. Residues Phe330 and Lys331 each contribute to the UDP-N-acetyl-alpha-D-mannosaminouronate site. NAD(+) is bound at residue Arg338. Lys416 contacts UDP-N-acetyl-alpha-D-mannosaminouronate.

It belongs to the UDP-glucose/GDP-mannose dehydrogenase family. WecC subfamily. In terms of assembly, homodimer.

It carries out the reaction UDP-N-acetyl-alpha-D-mannosamine + 2 NAD(+) + H2O = UDP-N-acetyl-alpha-D-mannosaminouronate + 2 NADH + 3 H(+). The protein operates within bacterial outer membrane biogenesis; enterobacterial common antigen biosynthesis. In terms of biological role, catalyzes the four-electron oxidation of UDP-N-acetyl-D-mannosamine (UDP-ManNAc), reducing NAD(+) and releasing UDP-N-acetylmannosaminuronic acid (UDP-ManNAcA). The sequence is that of UDP-N-acetyl-D-mannosamine dehydrogenase from Salmonella typhimurium (strain LT2 / SGSC1412 / ATCC 700720).